Here is a 516-residue protein sequence, read N- to C-terminus: Glycosyl hydrolase family 109 protein 4 (516 aa).

A signal peptide spans Met-1–Ala-18. A lipid anchor (N-palmitoyl cysteine) is attached at Cys-19. Cys-19 is lipidated: S-diacylglycerol cysteine. Residues Met-76 to Arg-77, Asp-98, Trp-146 to His-149, Glu-166 to Val-167, and Asn-195 contribute to the NAD(+) site. Residues Tyr-224, Arg-247, Tyr-259–His-262, and Tyr-337 contribute to the substrate site. Tyr-259 provides a ligand contact to NAD(+).

The protein belongs to the Gfo/Idh/MocA family. Glycosyl hydrolase 109 subfamily. NAD(+) serves as cofactor.

The protein localises to the cell membrane. Glycosidase. This chain is Glycosyl hydrolase family 109 protein 4, found in Phocaeicola vulgatus (strain ATCC 8482 / DSM 1447 / JCM 5826 / CCUG 4940 / NBRC 14291 / NCTC 11154) (Bacteroides vulgatus).